We begin with the raw amino-acid sequence, 30 residues long: Alpha-conotoxin EIVA (30 aa).

3 cysteine pairs are disulfide-bonded: Cys2-Cys16, Cys3-Cys11, and Cys14-Cys24. 4-hydroxyproline occurs at positions 7, 13, 21, 22, and 27. Position 30 is a glycine amide (Gly30).

As to expression, expressed by the venom duct.

Its subcellular location is the secreted. Functionally, alpha-conotoxins act on postsynaptic membranes, they bind to the nicotinic acetylcholine receptors (nAChR) and thus inhibit them. This toxin binds with high affinity to both fetal (alpha-1-beta-1-epsilon-delta (CHRNA1-CHRNB1-CHRND-CHRNE) subunits) and adult (alpha-1/beta-1/gamma/delta subunits) mammalian muscle nicotinic acetylcholine receptors (nAChR). This chain is Alpha-conotoxin EIVA, found in Conus ermineus (Agate cone).